The following is a 536-amino-acid chain: uncharacterized protein (536 aa).

The Radical SAM core domain occupies 163-394 (LDAYDSMSVQ…MNFIPTRPLE (232 aa)). [4Fe-4S] cluster contacts are provided by Cys177, Cys181, and Cys184.

It depends on [4Fe-4S] cluster as a cofactor.

This is an uncharacterized protein from Synechocystis sp. (strain ATCC 27184 / PCC 6803 / Kazusa).